The chain runs to 559 residues: uncharacterized protein (559 aa).

Disordered regions lie at residues 315 to 360 (TDDA…ERDI) and 454 to 559 (DKID…STEN). Over residues 320–329 (NENSDNSMNT) the composition is skewed to polar residues. Residues 348–357 (DNNDDSDDSE) show a composition bias toward acidic residues. A coiled-coil region spans residues 433–495 (ELKIQEMEKI…KRRQKRSQRS (63 aa)). Residues 454-501 (DKIDMDQIKSEMSRRRDESNKRRDEKRKDREEKRRQKRSQRSDTRKQG) show a composition bias toward basic and acidic residues. A compositionally biased stretch (low complexity) spans 507–527 (SDEATSDQTQSTDSNNTTQTA).

It is found in the virion. This is an uncharacterized protein from Acanthamoeba polyphaga mimivirus (APMV).